A 323-amino-acid chain; its full sequence is Galectin-4 (323 aa).

Galectin domains follow at residues 19 to 150 (YYQP…INFI) and 194 to 323 (YFGR…YVQI). 256–262 (WGSEEKK) is a binding site for a beta-D-galactoside. S258 carries the post-translational modification Phosphoserine.

As to quaternary structure, monomer.

In terms of biological role, galectin that binds lactose and a related range of sugars. May be involved in the assembly of adherens junctions. The polypeptide is Galectin-4 (LGALS4) (Homo sapiens (Human)).